The sequence spans 178 residues: CASP-like protein 2U3 (178 aa).

The Cytoplasmic portion of the chain corresponds to 1–4 (MACR). Residues 5–25 (VMEVLLRVLAILLSIAGALVM) form a helical membrane-spanning segment. Topologically, residues 26–52 (AKDKQDTFVMLGTVPVPLYARHSYVEA) are extracellular. The chain crosses the membrane as a helical span at residues 53 to 73 (FVFLVYANGIVAIYCFIAVLL). Topologically, residues 74–80 (SLLAKSR) are cytoplasmic. A helical membrane pass occupies residues 81-101 (VLAGLLFFMDQALAYLLLAAA). The Extracellular segment spans residues 102–132 (AASTEVAYIAKRGEKKLVWGEVCSNFEHFCN). Residues 133 to 153 (LVGVSLVLTFLSVLVLVTLAI) form a helical membrane-spanning segment. Topologically, residues 154 to 178 (LSGKRLFGHPPLCAPPSTPPVHQGV) are cytoplasmic.

The protein belongs to the Casparian strip membrane proteins (CASP) family. Homodimer and heterodimers.

It is found in the cell membrane. This chain is CASP-like protein 2U3, found in Pteridium aquilinum subsp. aquilinum (Bracken fern).